The sequence spans 132 residues: Large ribosomal subunit protein bL12 (132 aa).

Belongs to the bacterial ribosomal protein bL12 family. Homodimer. Part of the ribosomal stalk of the 50S ribosomal subunit. Forms a multimeric L10(L12)X complex, where L10 forms an elongated spine to which 2 to 4 L12 dimers bind in a sequential fashion. Binds GTP-bound translation factors.

Forms part of the ribosomal stalk which helps the ribosome interact with GTP-bound translation factors. Is thus essential for accurate translation. The sequence is that of Large ribosomal subunit protein bL12 from Chloroflexus aggregans (strain MD-66 / DSM 9485).